The primary structure comprises 235 residues: 7-carboxy-7-deazaguanine synthase (235 aa).

Residues 25–27 (IQG) and Arg-40 contribute to the substrate site. Residues 31-235 (FTGTYSVFVR…PRLHLLVQLP (205 aa)) form the Radical SAM core domain. Residues Cys-44, Cys-48, and Cys-51 each coordinate [4Fe-4S] cluster. Thr-53 contacts Mg(2+). Thr-85 provides a ligand contact to substrate. S-adenosyl-L-methionine contacts are provided by residues Gly-87 and 135-137 (SPK). Pro-235 serves as a coordination point for substrate.

Belongs to the radical SAM superfamily. 7-carboxy-7-deazaguanine synthase family. Homodimer. [4Fe-4S] cluster is required as a cofactor. It depends on S-adenosyl-L-methionine as a cofactor. Mg(2+) serves as cofactor.

The enzyme catalyses 6-carboxy-5,6,7,8-tetrahydropterin + H(+) = 7-carboxy-7-deazaguanine + NH4(+). Its pathway is purine metabolism; 7-cyano-7-deazaguanine biosynthesis. Its function is as follows. Catalyzes the complex heterocyclic radical-mediated conversion of 6-carboxy-5,6,7,8-tetrahydropterin (CPH4) to 7-carboxy-7-deazaguanine (CDG), a step common to the biosynthetic pathways of all 7-deazapurine-containing compounds. This chain is 7-carboxy-7-deazaguanine synthase, found in Hyperthermus butylicus (strain DSM 5456 / JCM 9403 / PLM1-5).